The following is a 350-amino-acid chain: Protein-arginine kinase (350 aa).

In terms of domain architecture, Phosphagen kinase C-terminal spans 21–253; that stretch reads IVISSRIRLA…VRLADQEREA (233 aa). ATP is bound by residues 24-28, His-90, Arg-124, 175-179, and 206-211; these read SSRIR, RASTM, and RGLYGE. The RDXXRA motif of the pArg binding pocket involved in allosteric regulation motif lies at 336–341; the sequence is RDVHRA.

It belongs to the ATP:guanido phosphotransferase family.

It catalyses the reaction L-arginyl-[protein] + ATP = N(omega)-phospho-L-arginyl-[protein] + ADP + H(+). With respect to regulation, appears to be allosterically activated by the binding of pArg-containing polypeptides to the pArg-binding pocket localized in the C-terminal domain of McsB. In terms of biological role, catalyzes the specific phosphorylation of arginine residues in proteins. The sequence is that of Protein-arginine kinase from Moorella thermoacetica (strain ATCC 39073 / JCM 9320).